We begin with the raw amino-acid sequence, 1124 residues long: ATP-dependent DNA helicase mph1 (1124 aa).

2 disordered regions span residues 1-103 and 123-302; these read MFTL…EARS and QLTQ…PTQH. Acidic residues-rich tracts occupy residues 7-17 and 169-178; these read DSSDYFDDDLG and RDDEYDDDEE. Over residues 210 to 222 the composition is skewed to polar residues; sequence TPIIGQQSTTIEA. Acidic residues predominate over residues 226-236; it reads LLDDIPDDAFD. The span at 255–271 shows a compositional bias: polar residues; the sequence is SFTQSTNRPLGVRQTTL. The Helicase ATP-binding domain maps to 328–496; the sequence is IAQKGLFHNL…AVIDGLDISR (169 aa). 341–348 serves as a coordination point for ATP; it reads LPTGLGKT. Positions 444 to 447 match the DEAH box motif; sequence DEAH. The Helicase C-terminal domain occupies 666 to 840; it reads YLKQVVLNHF…GTRFTFHDDM (175 aa). The span at 855-873 shows a compositional bias: basic and acidic residues; the sequence is KRAIDIPEENTVRDLPEPK. Disordered stretches follow at residues 855 to 923 and 1016 to 1124; these read KRAI…TPEP and MPKA…DSDD. Basic residues-rich tracts occupy residues 874 to 886 and 906 to 916; these read RRGR…PKKF and SKRRVPNKSKA.

The protein belongs to the DEAD box helicase family. DEAH subfamily. FANCM sub-subfamily. In terms of assembly, interacts with the MHF histone-fold complex to form the FANCM-MHF complex.

The protein resides in the nucleus. It catalyses the reaction ATP + H2O = ADP + phosphate + H(+). Functionally, ATP-dependent DNA helicase involved in DNA damage repair by homologous recombination and in genome maintenance. Capable of unwinding D-loops. Plays a role in limiting crossover recombinants during mitotic DNA double-strand break (DSB) repair. Component of a FANCM-MHF complex which promotes gene conversion at blocked replication forks, probably by reversal of the stalled fork. This chain is ATP-dependent DNA helicase mph1, found in Aspergillus niger (strain ATCC MYA-4892 / CBS 513.88 / FGSC A1513).